Consider the following 63-residue polypeptide: MSRKCEICGKGVVYGVQYSHSHRQSKRSFAPNIKRVKAIVNGTPKRVHVCTRCLRSGKVQRAI.

The protein belongs to the bacterial ribosomal protein bL28 family.

The sequence is that of Large ribosomal subunit protein bL28 from Clostridium botulinum (strain ATCC 19397 / Type A).